The chain runs to 155 residues: uncharacterized protein (155 aa).

An N-terminal signal peptide occupies residues methionine 1–alanine 19.

This is an uncharacterized protein from Haemophilus influenzae (strain ATCC 51907 / DSM 11121 / KW20 / Rd).